The sequence spans 376 residues: Lipoyl synthase, mitochondrial (376 aa).

Residues C103, C108, C114, C134, C138, C141, and S349 each contribute to the [4Fe-4S] cluster site. The 220-residue stretch at E119–L338 folds into the Radical SAM core domain.

Belongs to the radical SAM superfamily. Lipoyl synthase family. [4Fe-4S] cluster is required as a cofactor.

Its subcellular location is the mitochondrion. The catalysed reaction is [[Fe-S] cluster scaffold protein carrying a second [4Fe-4S](2+) cluster] + N(6)-octanoyl-L-lysyl-[protein] + 2 oxidized [2Fe-2S]-[ferredoxin] + 2 S-adenosyl-L-methionine + 4 H(+) = [[Fe-S] cluster scaffold protein] + N(6)-[(R)-dihydrolipoyl]-L-lysyl-[protein] + 4 Fe(3+) + 2 hydrogen sulfide + 2 5'-deoxyadenosine + 2 L-methionine + 2 reduced [2Fe-2S]-[ferredoxin]. The protein operates within protein modification; protein lipoylation via endogenous pathway; protein N(6)-(lipoyl)lysine from octanoyl-[acyl-carrier-protein]: step 2/2. Functionally, catalyzes the radical-mediated insertion of two sulfur atoms into the C-6 and C-8 positions of the octanoyl moiety bound to the lipoyl domains of lipoate-dependent enzymes, thereby converting the octanoylated domains into lipoylated derivatives. The sequence is that of Lipoyl synthase, mitochondrial from Drosophila ananassae (Fruit fly).